The sequence spans 42 residues: Large ribosomal subunit protein bL36 (42 aa).

This sequence belongs to the bacterial ribosomal protein bL36 family.

This Wolbachia pipientis subsp. Culex pipiens (strain wPip) protein is Large ribosomal subunit protein bL36.